A 544-amino-acid polypeptide reads, in one-letter code: MAKDVRLGLDAREKMVEGINVLADAVKVTLGPKGRNVVLEKSFGAPTVTKDGVSVAREIELEDKFMNMGAQMVKEVSSQTNDVAGDGTTTATVLAQSIVREGMKSVAAGMNPMDLNRGIHKAVEAVVKEIQKMSVPCTTTESIAQVGTISANSDSAVGKMIAEAMEKVSTEGVITVEEGSSLHDELVVVEGMEFDRGYLSPYFVTNQEKMVAELDNPYILLHDKKISNIRDLLPTLEAVSKAGRPLLIIAEDVDGEALATLVINNMRGIVKATAIKAPGFGERRKAMLQDMAVLTGGTVISEEVGLTLENVTLDMLGETKSAVVGKDSTKLIDGAGAKADIEARCAQIRSQAENTTSEYDSEKLQERLAKLAGGVAVIKLGAATEVEMKEKKDRVDDALHATRAAVQEGIVAGGGVALVRARSKVKVKGDNDEQQLGIEIALRAMEEPMRQIAANCGLEGSVIVNKVMESKDNMGFDAASETYVDMIKAGIIDPAKVTRSALQNAASVAGLVLTTGAAIADLPSKDGASADAAAGGMGGMGGMM.

ATP contacts are provided by residues 29–32, Lys-50, 86–90, Gly-414, 477–479, and Asp-493; these read TLGP, DGTTT, and DAA.

This sequence belongs to the chaperonin (HSP60) family. As to quaternary structure, forms a cylinder of 14 subunits composed of two heptameric rings stacked back-to-back. Interacts with the co-chaperonin GroES.

The protein resides in the cytoplasm. It catalyses the reaction ATP + H2O + a folded polypeptide = ADP + phosphate + an unfolded polypeptide.. Its function is as follows. Together with its co-chaperonin GroES, plays an essential role in assisting protein folding. The GroEL-GroES system forms a nano-cage that allows encapsulation of the non-native substrate proteins and provides a physical environment optimized to promote and accelerate protein folding. This chain is Chaperonin GroEL, found in Hydrogenovibrio crunogenus (strain DSM 25203 / XCL-2) (Thiomicrospira crunogena).